The sequence spans 208 residues: FMN-dependent NADH:quinone oxidoreductase 1 (208 aa).

It belongs to the azoreductase type 1 family. Homodimer. FMN is required as a cofactor.

It catalyses the reaction 2 a quinone + NADH + H(+) = 2 a 1,4-benzosemiquinone + NAD(+). The enzyme catalyses N,N-dimethyl-1,4-phenylenediamine + anthranilate + 2 NAD(+) = 2-(4-dimethylaminophenyl)diazenylbenzoate + 2 NADH + 2 H(+). In terms of biological role, quinone reductase that provides resistance to thiol-specific stress caused by electrophilic quinones. Its function is as follows. Also exhibits azoreductase activity. Catalyzes the reductive cleavage of the azo bond in aromatic azo compounds to the corresponding amines. The protein is FMN-dependent NADH:quinone oxidoreductase 1 of Bacillus cereus (strain ATCC 14579 / DSM 31 / CCUG 7414 / JCM 2152 / NBRC 15305 / NCIMB 9373 / NCTC 2599 / NRRL B-3711).